The chain runs to 465 residues: Phosphomannomutase/phosphoglucomutase (465 aa).

S110 serves as the catalytic Phosphoserine intermediate. Mg(2+) is bound by residues S110, D244, D246, and D248. 3 residues coordinate substrate: E327, S329, and H331.

The protein belongs to the phosphohexose mutase family. In terms of assembly, monomer. Mg(2+) is required as a cofactor.

It carries out the reaction alpha-D-mannose 1-phosphate = D-mannose 6-phosphate. The enzyme catalyses alpha-D-glucose 1-phosphate = alpha-D-glucose 6-phosphate. It participates in nucleotide-sugar biosynthesis; GDP-alpha-D-mannose biosynthesis; alpha-D-mannose 1-phosphate from D-fructose 6-phosphate: step 2/2. It functions in the pathway bacterial outer membrane biogenesis; lipopolysaccharide biosynthesis. Its function is as follows. The phosphomannomutase activity produces a precursor for alginate polymerization. The alginate layer causes a mucoid phenotype and provides a protective barrier against host immune defenses and antibiotics. Also involved in core-LPS biosynthesis due to its phosphoglucomutase activity. Essential for biofilm production. The protein is Phosphomannomutase/phosphoglucomutase (algC) of Pseudomonas syringae pv. tomato (strain ATCC BAA-871 / DC3000).